The sequence spans 173 residues: Photosystem I assembly protein Ycf3 (173 aa).

TPR repeat units follow at residues 35–68, 72–105, and 120–153; these read AFAY…EEDP, SYTF…NPKM, and GEQA…APDN.

Belongs to the Ycf3 family.

It is found in the plastid. It localises to the cyanelle thylakoid membrane. In terms of biological role, essential for the assembly of the photosystem I (PSI) complex. May act as a chaperone-like factor to guide the assembly of the PSI subunits. This chain is Photosystem I assembly protein Ycf3, found in Cyanophora paradoxa.